A 177-amino-acid chain; its full sequence is Large ribosomal subunit protein uL6 (177 aa).

The protein belongs to the universal ribosomal protein uL6 family. Part of the 50S ribosomal subunit.

In terms of biological role, this protein binds to the 23S rRNA, and is important in its secondary structure. It is located near the subunit interface in the base of the L7/L12 stalk, and near the tRNA binding site of the peptidyltransferase center. This chain is Large ribosomal subunit protein uL6, found in Zymomonas mobilis subsp. mobilis (strain ATCC 31821 / ZM4 / CP4).